The following is a 335-amino-acid chain: Protein-arginine kinase (335 aa).

Positions 21–244 (IVMSSRIRLA…NQIIHEEKQI (224 aa)) constitute a Phosphagen kinase C-terminal domain. Residues 24 to 28 (SSRIR), H82, R115, 166 to 170 (RASVM), and 197 to 202 (RGIYGE) contribute to the ATP site.

This sequence belongs to the ATP:guanido phosphotransferase family.

It catalyses the reaction L-arginyl-[protein] + ATP = N(omega)-phospho-L-arginyl-[protein] + ADP + H(+). Functionally, catalyzes the specific phosphorylation of arginine residues in proteins. The chain is Protein-arginine kinase from Staphylococcus aureus (strain USA300).